A 199-amino-acid chain; its full sequence is NADH-quinone oxidoreductase subunit C (199 aa).

It belongs to the complex I 30 kDa subunit family. As to quaternary structure, NDH-1 is composed of 14 different subunits. Subunits NuoB, C, D, E, F, and G constitute the peripheral sector of the complex.

It localises to the cell inner membrane. It carries out the reaction a quinone + NADH + 5 H(+)(in) = a quinol + NAD(+) + 4 H(+)(out). In terms of biological role, NDH-1 shuttles electrons from NADH, via FMN and iron-sulfur (Fe-S) centers, to quinones in the respiratory chain. The immediate electron acceptor for the enzyme in this species is believed to be ubiquinone. Couples the redox reaction to proton translocation (for every two electrons transferred, four hydrogen ions are translocated across the cytoplasmic membrane), and thus conserves the redox energy in a proton gradient. This chain is NADH-quinone oxidoreductase subunit C, found in Cupriavidus taiwanensis (strain DSM 17343 / BCRC 17206 / CCUG 44338 / CIP 107171 / LMG 19424 / R1) (Ralstonia taiwanensis (strain LMG 19424)).